The chain runs to 310 residues: ADP-L-glycero-D-manno-heptose-6-epimerase (310 aa).

NADP(+)-binding positions include 10–11 (FI), 31–32 (DN), K38, K53, 75–79 (EGACS), and N92. Catalysis depends on Y140, which acts as the Proton acceptor. K144 lines the NADP(+) pocket. A substrate-binding site is contributed by N169. Residues V170 and K178 each contribute to the NADP(+) site. The active-site Proton acceptor is the K178. Residues S180, H187, 201–204 (FEGS), R209, and Y272 contribute to the substrate site.

Belongs to the NAD(P)-dependent epimerase/dehydratase family. HldD subfamily. As to quaternary structure, homopentamer. It depends on NADP(+) as a cofactor.

It catalyses the reaction ADP-D-glycero-beta-D-manno-heptose = ADP-L-glycero-beta-D-manno-heptose. Its pathway is nucleotide-sugar biosynthesis; ADP-L-glycero-beta-D-manno-heptose biosynthesis; ADP-L-glycero-beta-D-manno-heptose from D-glycero-beta-D-manno-heptose 7-phosphate: step 4/4. Functionally, catalyzes the interconversion between ADP-D-glycero-beta-D-manno-heptose and ADP-L-glycero-beta-D-manno-heptose via an epimerization at carbon 6 of the heptose. The sequence is that of ADP-L-glycero-D-manno-heptose-6-epimerase from Salmonella arizonae (strain ATCC BAA-731 / CDC346-86 / RSK2980).